Consider the following 407-residue polypeptide: Serine/threonine transporter SstT (407 aa).

The next 9 helical transmembrane spans lie at Gly-14–Ser-34, Phe-48–Ile-68, Ile-82–Phe-102, Ala-141–Leu-161, Ile-192–Gly-212, Leu-218–Phe-238, Ile-290–Leu-310, Met-316–Ala-336, and Val-363–Thr-383.

The protein belongs to the dicarboxylate/amino acid:cation symporter (DAACS) (TC 2.A.23) family.

It is found in the cell inner membrane. The enzyme catalyses L-serine(in) + Na(+)(in) = L-serine(out) + Na(+)(out). It carries out the reaction L-threonine(in) + Na(+)(in) = L-threonine(out) + Na(+)(out). Its function is as follows. Involved in the import of serine and threonine into the cell, with the concomitant import of sodium (symport system). This is Serine/threonine transporter SstT from Shewanella pealeana (strain ATCC 700345 / ANG-SQ1).